Consider the following 1966-residue polypeptide: Alpha-protein kinase 2 (1966 aa).

6 disordered regions span residues 23–65 (NSSP…STGL), 211–231 (AMNSEQSPDQPFSIASNDTDK), 1211–1259 (LKSN…AYSD), 1303–1365 (SLPN…EGAG), 1386–1423 (KTQGKKKKKHVQHGTPKPENDAPTDVRSESRQKNVNGK), and 1437–1463 (NKPVAQPSGKTDITKKDSAQKVMSVRP). Residues 211–227 (AMNSEQSPDQPFSIASN) are compositionally biased toward polar residues. Positions 1211–1221 (LKSNKKSSSSD) are enriched in low complexity. A compositionally biased stretch (basic and acidic residues) spans 1325–1342 (SDGKMRSKHKEKPDDKQQ). Residues 1388–1397 (QGKKKKKHVQ) are compositionally biased toward basic residues. The segment covering 1401 to 1417 (PKPENDAPTDVRSESRQ) has biased composition (basic and acidic residues). One can recognise an Ig-like domain in the interval 1577–1659 (PRVVSEIQAD…SLIVANISVS (83 aa)). A disulfide bridge connects residues Cys1599 and Cys1649. The 233-residue stretch at 1702–1934 (KEDFLSDQYF…YCELLGLVSL (233 aa)) folds into the Alpha-type protein kinase domain. The tract at residues 1937-1966 (KPKRTVAPPKPKTQPVPKKKTFGPVLNAKS) is disordered.

Belongs to the protein kinase superfamily. Alpha-type protein kinase family. ALPK subfamily. In terms of tissue distribution, expressed in developing cardiac tissue.

Its subcellular location is the basolateral cell membrane. The enzyme catalyses L-seryl-[protein] + ATP = O-phospho-L-seryl-[protein] + ADP + H(+). It catalyses the reaction L-threonyl-[protein] + ATP = O-phospho-L-threonyl-[protein] + ADP + H(+). Protein kinase that recognizes phosphorylation sites in which the surrounding peptides have an alpha-helical conformation. Regulates cardiac development and cardiomyocyte differentiation by negatively regulating Wnt/beta-catenin signaling. This chain is Alpha-protein kinase 2 (alpk2), found in Danio rerio (Zebrafish).